Reading from the N-terminus, the 313-residue chain is Kazal-type serine protease inhibitor domain-containing protein 1 (313 aa).

Positions 1–37 are cleaved as a signal peptide; that stretch reads MPRVFTGLPANYAAPTLALSLLLPLLLVVWTQLPVSA. The 81-residue stretch at 56-136 folds into the IGFBP N-terminal domain; sequence EGEGCAPCRP…EVPEPLCVCR (81 aa). 7 disulfide bridges follow: C60/C83, C63/C85, C68/C86, C74/C89, C97/C115, C109/C133, and C142/C175. One can recognise a Kazal-like domain in the interval 127–177; that stretch reads EVPEPLCVCRSQRPLCGSDGRTYAQICRLQEAARARLDANLTVVHPGPCES. N-linked (GlcNAc...) asparagine glycosylation is found at N166 and N190. One can recognise an Ig-like C2-type domain in the interval 179-276; sequence PQILSQPHNI…GQAEASATLT (98 aa). Cysteines 200 and 260 form a disulfide. Residue N284 is glycosylated (N-linked (GlcNAc...) asparagine). Residues 290–313 form a disordered region; it reads QLQSRSLFPEEEEEAESEELGDYY. A compositionally biased stretch (acidic residues) spans 298-313; it reads PEEEEEAESEELGDYY.

In terms of tissue distribution, highly expressed in the spleen. Moderately expressed in the skin, lung and urinary bladder. Weakly expressed in the brain, tongue, esophagus, stomach, large intestine, liver and bone. Expressed in osteoblastic cells during bone regeneration. Expressed in secretory osteoblasts in the tooth.

The protein localises to the secreted. It is found in the extracellular space. The protein resides in the extracellular matrix. In terms of biological role, involved in the proliferation of osteoblasts during bone formation and bone regeneration. Promotes matrix assembly. This is Kazal-type serine protease inhibitor domain-containing protein 1 (Kazald1) from Mus musculus (Mouse).